A 102-amino-acid chain; its full sequence is MTSLPVLLFLIILLLPSMITEGRVLTQTGKEATIFADQKTNHEADLKNPDPQEVQRALARILCALGELDKLVKDQANAGQQEFKLPKDFTGRSKCRSLGRIK.

Positions 1 to 22 are cleaved as a signal peptide; sequence MTSLPVLLFLIILLLPSMITEG. Cys63 and Cys95 are disulfide-bonded.

It belongs to the exocrine gland-secreted peptide family. Monomer. In terms of tissue distribution, expressed in the extraorbital lacrimal gland from where it is secreted into tears.

The protein localises to the secreted. In terms of biological role, male-specific phermone which is recognized by the Vmn2r116/V2rp5 receptor in the vomeronasal organ (VNO) and enhances female sexual receptive behavior (lordosis) upon male mounting, resulting in successful copulation. This is Exocrine gland-secreted peptide 1 from Mus musculus (Mouse).